The primary structure comprises 908 residues: Protein translocase subunit SecA (908 aa).

ATP contacts are provided by residues Gln-90, 108-112 (GEGKT), and Asp-503. Over residues 846-864 (AAAAEAPVAPAPQPAAAAP) the composition is skewed to low complexity. A disordered region spans residues 846–884 (AAAAEAPVAPAPQPAAAAPQPTPELVGAEAGEPDPAAWG). 4 residues coordinate Zn(2+): Cys-892, Cys-894, Cys-903, and His-904.

Belongs to the SecA family. Monomer and homodimer. Part of the essential Sec protein translocation apparatus which comprises SecA, SecYEG and auxiliary proteins SecDF-YajC and YidC. It depends on Zn(2+) as a cofactor.

It localises to the cell inner membrane. Its subcellular location is the cytoplasm. The catalysed reaction is ATP + H2O + cellular proteinSide 1 = ADP + phosphate + cellular proteinSide 2.. Part of the Sec protein translocase complex. Interacts with the SecYEG preprotein conducting channel. Has a central role in coupling the hydrolysis of ATP to the transfer of proteins into and across the cell membrane, serving both as a receptor for the preprotein-SecB complex and as an ATP-driven molecular motor driving the stepwise translocation of polypeptide chains across the membrane. This chain is Protein translocase subunit SecA, found in Cereibacter sphaeroides (strain ATCC 17029 / ATH 2.4.9) (Rhodobacter sphaeroides).